Here is a 147-residue protein sequence, read N- to C-terminus: Myosin regulatory light chain (147 aa).

Threonine 1 carries the post-translational modification N-acetylthreonine. 3 consecutive EF-hand domains span residues 2–37, 73–108, and 109–144; these read ASAD…LGKN, EQSK…LGDA, and LTSS…GYPL. Ca(2+) is bound by residues aspartate 15, aspartate 17, aspartate 19, lysine 21, glutamate 26, aspartate 86, asparagine 90, threonine 92, and glutamate 97.

This is Myosin regulatory light chain from Physarum polycephalum (Slime mold).